A 218-amino-acid chain; its full sequence is Adenylate kinase (218 aa).

Gly10–Thr15 contacts ATP. The tract at residues Ser30 to Val59 is NMP. Residues Thr31, Arg36, Gly57–Val59, Gly85–Arg88, and Gln92 each bind AMP. Residues Gly122–Asp159 are LID. Residues Arg123 and Thr132–Tyr133 contribute to the ATP site. AMP-binding residues include Arg156 and Arg167. Arg203 is an ATP binding site.

Belongs to the adenylate kinase family. Monomer.

It is found in the cytoplasm. It catalyses the reaction AMP + ATP = 2 ADP. The protein operates within purine metabolism; AMP biosynthesis via salvage pathway; AMP from ADP: step 1/1. Functionally, catalyzes the reversible transfer of the terminal phosphate group between ATP and AMP. Plays an important role in cellular energy homeostasis and in adenine nucleotide metabolism. The polypeptide is Adenylate kinase (Chromobacterium violaceum (strain ATCC 12472 / DSM 30191 / JCM 1249 / CCUG 213 / NBRC 12614 / NCIMB 9131 / NCTC 9757 / MK)).